An 81-amino-acid chain; its full sequence is MSRECYLTGKKNLVVNSVIRRGKARADGGVGRKTTGITKRVQRANLHKKAIRENGQVKTVWLSANALRTLSKGPYKGIELI.

The protein belongs to the bacterial ribosomal protein bL28 family. In terms of assembly, part of the 50S ribosomal subunit.

This Deinococcus radiodurans (strain ATCC 13939 / DSM 20539 / JCM 16871 / CCUG 27074 / LMG 4051 / NBRC 15346 / NCIMB 9279 / VKM B-1422 / R1) protein is Large ribosomal subunit protein bL28.